The primary structure comprises 203 residues: IQ domain-containing protein F3 (203 aa).

Over residues M1 to P12 the composition is skewed to basic and acidic residues. A disordered region spans residues M1 to E111. A coiled-coil region spans residues E13 to S82. Over residues D29–E38 the composition is skewed to acidic residues. Positions A39 to K51 are enriched in basic and acidic residues. A compositionally biased stretch (acidic residues) spans D64 to E73. Composition is skewed to basic and acidic residues over residues A74–K86 and Q96–E111. The 30-residue stretch at V129–T158 folds into the IQ domain.

This is IQ domain-containing protein F3 (Iqcf3) from Mus musculus (Mouse).